The chain runs to 168 residues: Lipoprotein signal peptidase (168 aa).

Transmembrane regions (helical) follow at residues Trp-12 to Ala-32, Trp-67 to Leu-87, and Asn-93 to Ile-113. Catalysis depends on residues Asp-123 and Asp-141. Residues Ala-136 to Phe-156 form a helical membrane-spanning segment.

This sequence belongs to the peptidase A8 family.

Its subcellular location is the cell inner membrane. The enzyme catalyses Release of signal peptides from bacterial membrane prolipoproteins. Hydrolyzes -Xaa-Yaa-Zaa-|-(S,diacylglyceryl)Cys-, in which Xaa is hydrophobic (preferably Leu), and Yaa (Ala or Ser) and Zaa (Gly or Ala) have small, neutral side chains.. It functions in the pathway protein modification; lipoprotein biosynthesis (signal peptide cleavage). This protein specifically catalyzes the removal of signal peptides from prolipoproteins. This is Lipoprotein signal peptidase from Shewanella amazonensis (strain ATCC BAA-1098 / SB2B).